Reading from the N-terminus, the 300-residue chain is GTP cyclohydrolase FolE2 (300 aa).

The protein belongs to the GTP cyclohydrolase IV family.

The enzyme catalyses GTP + H2O = 7,8-dihydroneopterin 3'-triphosphate + formate + H(+). The protein operates within cofactor biosynthesis; 7,8-dihydroneopterin triphosphate biosynthesis; 7,8-dihydroneopterin triphosphate from GTP: step 1/1. Its function is as follows. Converts GTP to 7,8-dihydroneopterin triphosphate. This Bacillus licheniformis (strain ATCC 14580 / DSM 13 / JCM 2505 / CCUG 7422 / NBRC 12200 / NCIMB 9375 / NCTC 10341 / NRRL NRS-1264 / Gibson 46) protein is GTP cyclohydrolase FolE2.